The sequence spans 609 residues: MTQDYDNKRPVLVLQNDGLYQQRRSYTNEDEAWKSFLENPLTAATKAMMSINGDEDSAAALGLLYDYYKVPRERRLSAAKQEHDHADHEHSKRNGLPQINEQALLPDNRVQVLKTVPFNIVVPLANQVDKRGHLTTPDTTAAVSIAHPIKTESQSHCFSVGLQSVFHTEPTERIVAFDRAVPSDHFTSNNQPPNSQRRTPDSTFSETYKEDVPEVFFPPDLSLRMGSMNSEDYVFDSVAGNNFEYTLEASKSLRPKPGDSTMTYLNKGQFYPITLKEIGSNKGIHHPISKVRSVIMVVFADDKSREDQLRHWKYWHSRQHTAKQRCIDIADYKESFNTISNIEEIAYNAISFTWDLNDEGKVFISVNCLSTDFSSQKGVKGLPLNLQIDTYSYNNRSNKPVHRAYCQIKVFCDKGAERKIRDEERKQSKRKVQDVKVGLLPTHKRTDITVFKPMMDLDTQPVLFIPDVHFANLQRTTHVLPISPEDMEGELNPGMKRLPFSPEEDFNTPPAKLPRVDEPKRVLLYVRRETEEVFDALMLKTPTLKGLMEAVSEKYEVPIEKIGKIFKKCKKGILVNMDDNIIKHYSNEDTFHLQIEESGGSYKLTLTEI.

The transcription activation stretch occupies residues 1–91 (MTQDYDNKRP…EHDHADHEHS (91 aa)). A disordered region spans residues 183–207 (SDHFTSNNQPPNSQRRTPDSTFSET). Over residues 185 to 206 (HFTSNNQPPNSQRRTPDSTFSE) the composition is skewed to polar residues. The region spanning 239–465 (AGNNFEYTLE…DLDTQPVLFI (227 aa)) is the Grh/CP2 DB domain. Interaction with DNA regions lie at residues 371–380 (TDFSSQKGVK) and 418–421 (RKIR).

This sequence belongs to the grh/CP2 family. Grainyhead subfamily. As to quaternary structure, binds DNA as homodimer.

It localises to the nucleus. Its function is as follows. Transcription factor involved in epithelial development. Binds directly to the consensus DNA sequence 5'-AACCGGTT-3' and modulates expression of epidermal-specific genes, including XK81A1. Important regulator of DSG1 in the context of epidermal differentiation. Regulates the maintenance of skin barrier. No genetic interaction with GRHL3, nor functional cooperativity due to diverse target gene selectivity during epithelia development. Functions downstream of BMP-signaling cascade modulating endogenous bmp4-responsive targets. The polypeptide is Grainyhead-like protein 1 homolog (Xenopus laevis (African clawed frog)).